We begin with the raw amino-acid sequence, 917 residues long: Protein FAN (917 aa).

A GRAM domain is found at 176-247 (RLARTSFDKN…QDVRRIYKRR (72 aa)). A BEACH-type PH domain is found at 189 to 286 (NISEKLHMEC…DRDDLYFYIA (98 aa)). One can recognise a BEACH domain in the interval 290–575 (EHHVAEHTAE…QLFVTPHPRR (286 aa)). WD repeat units follow at residues 628–658 (IHKEAVTGITVSRNGSSVFTTSQDSTLKMFS), 670–700 (FSNMALSSCLLLPGDATVITSSWDNNVYFYS), 712–740 (GHDDAVSKICWHDNRLYSASWDSTVKVWS), 761–791 (EHDVSVDTISLNAASTLLVSGTKEGTVNIWD), 803–833 (CHSGIVCDTAFSPDSRHVLSTGTDGCLNVID), and 884–914 (GHTGAVTCIWMNEQCSSIITGGEDRQIIFWK).

In terms of tissue distribution, ubiquitous.

Its function is as follows. Couples the p55 TNF-receptor (TNF-R55 / TNFR1) to neutral sphingomyelinase (N-SMASE). Specifically binds to the N-smase activation domain of TNF-R55. May regulate ceramide production by N-SMASE. In Homo sapiens (Human), this protein is Protein FAN (NSMAF).